Reading from the N-terminus, the 450-residue chain is Tripartite motif-containing protein 77 (450 aa).

The RING-type zinc finger occupies 15–56 (CSICTDYLTDPVTICCGHRFCSPCLCLLWEDTLTPNCCPVCR). The B box-type zinc-finger motif lies at 88–131 (SAMLICRRHQEIKNLICETDRSLLCFLCSQSPRHATHKHYMTRE). Zn(2+) is bound by residues C93, H96, C115, and H121. One can recognise a B30.2/SPRY domain in the interval 269-450 (QLSAWTITGV…LRPFICHGSK (182 aa)).

The protein belongs to the TRIM/RBCC family.

The sequence is that of Tripartite motif-containing protein 77 (TRIM77) from Homo sapiens (Human).